A 181-amino-acid polypeptide reads, in one-letter code: MSSLSVYHVSSPEIPNKVLTHFEDIASTLAEQGVRFDRWQAAAKIQPGASQEEVIGAYKEQIDKLMTERGYITVDVISLNSDHPQKAELRAKFLEEHRHGEDEVRFFVAGRGLFTLHIDDYVYAVLCEKNDLISVPAGTKHWFDMGENPHFVAIRLFNNPEGWVANFTGEDIAGRFPRLED.

The Fe(2+) site is built by His97, His99, Glu103, and His141. Ni(2+)-binding residues include His97, His99, Glu103, and His141.

Belongs to the acireductone dioxygenase (ARD) family. As to quaternary structure, monomer. It depends on Fe(2+) as a cofactor. Requires Ni(2+) as cofactor.

The catalysed reaction is 1,2-dihydroxy-5-(methylsulfanyl)pent-1-en-3-one + O2 = 3-(methylsulfanyl)propanoate + CO + formate + 2 H(+). It catalyses the reaction 1,2-dihydroxy-5-(methylsulfanyl)pent-1-en-3-one + O2 = 4-methylsulfanyl-2-oxobutanoate + formate + 2 H(+). The protein operates within amino-acid biosynthesis; L-methionine biosynthesis via salvage pathway; L-methionine from S-methyl-5-thio-alpha-D-ribose 1-phosphate: step 5/6. In terms of biological role, catalyzes 2 different reactions between oxygen and the acireductone 1,2-dihydroxy-3-keto-5-methylthiopentene (DHK-MTPene) depending upon the metal bound in the active site. Fe-containing acireductone dioxygenase (Fe-ARD) produces formate and 2-keto-4-methylthiobutyrate (KMTB), the alpha-ketoacid precursor of methionine in the methionine recycle pathway. Ni-containing acireductone dioxygenase (Ni-ARD) produces methylthiopropionate, carbon monoxide and formate, and does not lie on the methionine recycle pathway. The chain is Acireductone dioxygenase from Pseudomonas fluorescens (strain Pf0-1).